The primary structure comprises 334 residues: GTPase Obg (334 aa).

The region spanning 1–159 (MRFVDEVVIK…KEVRLELNLL (159 aa)) is the Obg domain. The OBG-type G domain maps to 160–331 (ADVALLGLPN…LAKKLNEFLQ (172 aa)). GTP is bound by residues 166 to 173 (GLPNAGKS), 191 to 195 (FTTMY), 212 to 215 (DIPG), 282 to 285 (NKID), and 312 to 314 (SAA). Mg(2+) is bound by residues S173 and T193.

The protein belongs to the TRAFAC class OBG-HflX-like GTPase superfamily. OBG GTPase family. As to quaternary structure, monomer. Mg(2+) serves as cofactor.

The protein resides in the cytoplasm. Its function is as follows. An essential GTPase which binds GTP, GDP and possibly (p)ppGpp with moderate affinity, with high nucleotide exchange rates and a fairly low GTP hydrolysis rate. Plays a role in control of the cell cycle, stress response, ribosome biogenesis and in those bacteria that undergo differentiation, in morphogenesis control. The polypeptide is GTPase Obg (Francisella tularensis subsp. mediasiatica (strain FSC147)).